The primary structure comprises 85 residues: Splicing factor 3B subunit 5 (85 aa).

It belongs to the SF3B5 family. In terms of assembly, component of the SF3B complex. SF3B complex associates with the splicing factor SF3A complex and a 12S RNA unit to form the U2 small nuclear ribonucleoproteins complex (U2 snRNP). Identified in the SAGA transcription regulatory histone acetylation (HAT) complex; the interaction is RNA-independent.

Its subcellular location is the nucleus. Involved in pre-mRNA splicing as component of spliceosome. As part of the spliceosome complex, plays a role in the regulation of spermatogonial differentiation. When associated with the SAGA transcription regulatory histone acetylation (HAT) complex, might be involved in the transcriptional activation of a subset of SAGA-regulated genes. The polypeptide is Splicing factor 3B subunit 5 (Drosophila melanogaster (Fruit fly)).